A 208-amino-acid chain; its full sequence is Pyridoxine/pyridoxamine 5'-phosphate oxidase (208 aa).

Residues 53-58 (RTVLLK), 68-69 (YS), Lys75, and Gln100 contribute to the FMN site. Residue Lys58 participates in substrate binding. Substrate contacts are provided by Tyr118, Arg122, and Ser126. Residues 135–136 (QS) and Trp180 each bind FMN. 186–188 (RLH) contributes to the substrate binding site. Arg190 is an FMN binding site.

It belongs to the pyridoxamine 5'-phosphate oxidase family. In terms of assembly, homodimer. Requires FMN as cofactor.

It carries out the reaction pyridoxamine 5'-phosphate + O2 + H2O = pyridoxal 5'-phosphate + H2O2 + NH4(+). It catalyses the reaction pyridoxine 5'-phosphate + O2 = pyridoxal 5'-phosphate + H2O2. The protein operates within cofactor metabolism; pyridoxal 5'-phosphate salvage; pyridoxal 5'-phosphate from pyridoxamine 5'-phosphate: step 1/1. Its pathway is cofactor metabolism; pyridoxal 5'-phosphate salvage; pyridoxal 5'-phosphate from pyridoxine 5'-phosphate: step 1/1. In terms of biological role, catalyzes the oxidation of either pyridoxine 5'-phosphate (PNP) or pyridoxamine 5'-phosphate (PMP) into pyridoxal 5'-phosphate (PLP). This Xylella fastidiosa (strain Temecula1 / ATCC 700964) protein is Pyridoxine/pyridoxamine 5'-phosphate oxidase.